The chain runs to 417 residues: Serine hydroxymethyltransferase (417 aa).

Position 54 is an N6-acetyllysine (Lys-54). (6S)-5,6,7,8-tetrahydrofolate is bound by residues Leu-121 and 125–127; that span reads GHL. The residue at position 229 (Lys-229) is an N6-(pyridoxal phosphate)lysine. N6-acetyllysine is present on residues Lys-250, Lys-285, and Lys-354. 355 to 357 is a (6S)-5,6,7,8-tetrahydrofolate binding site; it reads SPF. Lys-375 carries the N6-acetyllysine modification.

This sequence belongs to the SHMT family. Homodimer. Pyridoxal 5'-phosphate is required as a cofactor.

The protein resides in the cytoplasm. It carries out the reaction (6R)-5,10-methylene-5,6,7,8-tetrahydrofolate + glycine + H2O = (6S)-5,6,7,8-tetrahydrofolate + L-serine. It participates in one-carbon metabolism; tetrahydrofolate interconversion. It functions in the pathway amino-acid biosynthesis; glycine biosynthesis; glycine from L-serine: step 1/1. In terms of biological role, catalyzes the reversible interconversion of serine and glycine with tetrahydrofolate (THF) serving as the one-carbon carrier. This reaction serves as the major source of one-carbon groups required for the biosynthesis of purines, thymidylate, methionine, and other important biomolecules. Also exhibits THF-independent aldolase activity toward beta-hydroxyamino acids, producing glycine and aldehydes, via a retro-aldol mechanism. The protein is Serine hydroxymethyltransferase of Escherichia coli O17:K52:H18 (strain UMN026 / ExPEC).